The following is a 211-amino-acid chain: Thymidylate kinase (211 aa).

Position 11 to 18 (11 to 18 (GPDGAGKT)) interacts with ATP.

This sequence belongs to the thymidylate kinase family.

It catalyses the reaction dTMP + ATP = dTDP + ADP. Phosphorylation of dTMP to form dTDP in both de novo and salvage pathways of dTTP synthesis. This Streptococcus pyogenes serotype M3 (strain ATCC BAA-595 / MGAS315) protein is Thymidylate kinase.